We begin with the raw amino-acid sequence, 55 residues long: Small ribosomal subunit protein eS31 (55 aa).

Cys-27, Cys-30, Cys-45, and Cys-48 together coordinate Zn(2+). The C4-type zinc finger occupies 27–48 (CSRCGKGFFMAQHKDRRSCGKC).

It belongs to the eukaryotic ribosomal protein eS31 family. In terms of assembly, part of the 30S ribosomal subunit. The cofactor is Zn(2+).

This Cenarchaeum symbiosum (strain A) protein is Small ribosomal subunit protein eS31.